Consider the following 299-residue polypeptide: Coenzyme PQQ synthesis protein B (299 aa).

Belongs to the PqqB family.

The protein operates within cofactor biosynthesis; pyrroloquinoline quinone biosynthesis. In terms of biological role, may be involved in the transport of PQQ or its precursor to the periplasm. This chain is Coenzyme PQQ synthesis protein B, found in Methylobacterium sp. (strain 4-46).